The chain runs to 591 residues: V-type ATP synthase alpha chain (591 aa).

Position 242–249 (242–249 (GPFGAGKT)) interacts with ATP.

Belongs to the ATPase alpha/beta chains family.

It catalyses the reaction ATP + H2O + 4 H(+)(in) = ADP + phosphate + 5 H(+)(out). In terms of biological role, produces ATP from ADP in the presence of a proton gradient across the membrane. The V-type alpha chain is a catalytic subunit. The chain is V-type ATP synthase alpha chain (atpA) from Chlamydia pneumoniae (Chlamydophila pneumoniae).